We begin with the raw amino-acid sequence, 98 residues long: NADH-ubiquinone oxidoreductase chain 4L (98 aa).

Transmembrane regions (helical) follow at residues 1–21, 29–49, and 61–81; these read MSLV…GLLM, SLLC…IMIL, and IILL…LVMV.

Belongs to the complex I subunit 4L family. In terms of assembly, core subunit of respiratory chain NADH dehydrogenase (Complex I) which is composed of 45 different subunits.

It is found in the mitochondrion inner membrane. It carries out the reaction a ubiquinone + NADH + 5 H(+)(in) = a ubiquinol + NAD(+) + 4 H(+)(out). Its function is as follows. Core subunit of the mitochondrial membrane respiratory chain NADH dehydrogenase (Complex I) which catalyzes electron transfer from NADH through the respiratory chain, using ubiquinone as an electron acceptor. Part of the enzyme membrane arm which is embedded in the lipid bilayer and involved in proton translocation. This Urotrichus talpoides (Japanese shrew mole) protein is NADH-ubiquinone oxidoreductase chain 4L (MT-ND4L).